A 332-amino-acid polypeptide reads, in one-letter code: MGSNIDGILRENLTLEELQEWLTSSEGNKLAIDDHIKATQGRVLPLRLLFNEFLRTISHIEQLSDKTPQEKFQLIRSKLQELYGKLHALVRDFQRLQPLFDTMVPFSETSERKFYPKETLGTAVEPVRPLASPSYRRPSNRSSADTPSSNAPTPSAAVVSGAALVAPQVKHQRRPRTNTAKRQPSVSASVVPSANSSGPATIPGATPLMLSGMSPLNMVASPLNGISPSRKPAQPHHQTTPSAALGMQPMQQKQMSIQAKATPSKSGTISSANLTPQSILNMSAFENSAGGVPNSAVPLNQNNNAIMGFPTDIDNIDLNALELGSLNMDLLG.

2 disordered regions span residues 125–206 (EPVR…PGAT) and 221–242 (SPLNGISPSRKPAQPHHQTTPS). The span at 132-143 (SPSYRRPSNRSS) shows a compositional bias: low complexity. The span at 144 to 153 (ADTPSSNAPT) shows a compositional bias: polar residues. Low complexity-rich tracts occupy residues 155 to 166 (SAAVVSGAALVA) and 184 to 200 (PSVSASVVPSANSSGPA).

This sequence belongs to the Mediator complex subunit 3 family. Component of the Mediator complex.

Its subcellular location is the nucleus. Component of the Mediator complex, a coactivator involved in regulated gene transcription of nearly all RNA polymerase II-dependent genes. Mediator functions as a bridge to convey information from gene-specific regulatory proteins to the basal RNA polymerase II transcription machinery. Mediator is recruited to promoters by direct interactions with regulatory proteins and serves as a scaffold for the assembly of a functional preinitiation complex with RNA polymerase II and the general transcription factors. The polypeptide is Mediator of RNA polymerase II transcription subunit 3 (PGD1) (Eremothecium gossypii (strain ATCC 10895 / CBS 109.51 / FGSC 9923 / NRRL Y-1056) (Yeast)).